The sequence spans 255 residues: ParA family protein CT_582 (255 aa).

It belongs to the ParA family.

This is ParA family protein CT_582 from Chlamydia trachomatis serovar D (strain ATCC VR-885 / DSM 19411 / UW-3/Cx).